The primary structure comprises 445 residues: Phosphoglucosamine mutase (445 aa).

Ser102 functions as the Phosphoserine intermediate in the catalytic mechanism. The Mg(2+) site is built by Ser102, Asp241, Asp243, and Asp245. Ser102 carries the post-translational modification Phosphoserine.

Belongs to the phosphohexose mutase family. The cofactor is Mg(2+). Post-translationally, activated by phosphorylation.

It carries out the reaction alpha-D-glucosamine 1-phosphate = D-glucosamine 6-phosphate. Functionally, catalyzes the conversion of glucosamine-6-phosphate to glucosamine-1-phosphate. The protein is Phosphoglucosamine mutase of Shewanella halifaxensis (strain HAW-EB4).